The sequence spans 227 residues: MVAIAPVITVDGPSGAGKGTLCQALAEVLGWQLLDSGAIYRVLALAAIHHQVDIQSEDALVPLAANLDVRFVPRKGKLSVMLEGEDVSNEIRTEAVGNTASQAAAFPRVREALLRRQRAFRVAPGLIADGRDMGTVVFSDAPVKIFLDASAEERARRRMLQLQEKGFSVNFECLLSEIQERDYRDRNRAVAPLAPAKDALILDSTSMSIEEVIDKALNYAKKILSIT.

Residue 12–20 (GPSGAGKGT) participates in ATP binding.

Belongs to the cytidylate kinase family. Type 1 subfamily.

The protein resides in the cytoplasm. It catalyses the reaction CMP + ATP = CDP + ADP. It carries out the reaction dCMP + ATP = dCDP + ADP. This chain is Cytidylate kinase, found in Photorhabdus laumondii subsp. laumondii (strain DSM 15139 / CIP 105565 / TT01) (Photorhabdus luminescens subsp. laumondii).